The sequence spans 416 residues: POC1 centriolar protein homolog A (416 aa).

WD repeat units follow at residues 16 to 55 (GHRD…RAYR), 58 to 97 (GHKD…ESVL), 100 to 139 (AHTG…IICT), 142 to 181 (EHNN…LIHT), 184 to 223 (EPGG…LLQH), 226 to 265 (VHSA…LLYT), and 268 to 307 (GHQG…VDYS). Residues 311–340 (QQKRDHRTPSAQASGAAGDPESRSGQKTEV) are disordered. The stretch at 380–412 (QLDVLTQTVAILEQRLTLTEDKLKECLEQQHQA) forms a coiled coil.

It belongs to the WD repeat POC1 family.

Its function is as follows. May play an important role in centriole assembly and/or stability and ciliogenesis. This is POC1 centriolar protein homolog A from Danio rerio (Zebrafish).